Reading from the N-terminus, the 439-residue chain is Methylenetetrahydrofolate--tRNA-(uracil-5-)-methyltransferase TrmFO (439 aa).

Position 8–13 (8–13 (GGGLAG)) interacts with FAD.

It belongs to the MnmG family. TrmFO subfamily. FAD serves as cofactor.

Its subcellular location is the cytoplasm. The catalysed reaction is uridine(54) in tRNA + (6R)-5,10-methylene-5,6,7,8-tetrahydrofolate + NADH + H(+) = 5-methyluridine(54) in tRNA + (6S)-5,6,7,8-tetrahydrofolate + NAD(+). It carries out the reaction uridine(54) in tRNA + (6R)-5,10-methylene-5,6,7,8-tetrahydrofolate + NADPH + H(+) = 5-methyluridine(54) in tRNA + (6S)-5,6,7,8-tetrahydrofolate + NADP(+). In terms of biological role, catalyzes the folate-dependent formation of 5-methyl-uridine at position 54 (M-5-U54) in all tRNAs. The sequence is that of Methylenetetrahydrofolate--tRNA-(uracil-5-)-methyltransferase TrmFO from Dictyoglomus turgidum (strain DSM 6724 / Z-1310).